A 550-amino-acid polypeptide reads, in one-letter code: MADKLFINALKKKFEESPEEKKTTFYTLGGWKQSERKTEFVNAGKEVAAKRGIPQYNPDIGTPLGQRVLMPYQVSTTDTFVEGDDLHFVNNAAMQQMWDDIRRTVIVGLNHAHAVIEKRLGKEVTPETITHYLETVNHAMPGAAVVQEHMVETHPALVADSYVKVFTGNDEIADEIDPAFVIDINKQFPEDQAETLKAEVGDGIWQVVRIPTIVSRTCDGATTSRWSAMQIGMSMISAYKQAAGEAATGDFAYAAKHAEVIHMGTYLPVRRARGENEPGGVPFGYLADICQSSRVNYEDPVRVSLDVVATGAMLYDQIWLGSYMSGGVGFTQYATAAYTDNILDDFTYFGKEYVEDKYGLCEAPNTMDTVLDVASEVTFYGLEQYEEYPALLEDQFGGSQRAAVVAAAAGCSTAFATANAQTGLSGWYLSMYLHKEQHSRLGFYGYDLQDQCGASNVFSIRGDEGLPLELRGPNYPNYAMNVGHQGEYAGISQAPHAARGDAFVFNPLVKIAFADDNLVFDFTNVRGEFAKGALREFEPAGERALITPAK.

Gln-147 is a coenzyme F430 binding site. Residues Arg-225, 256–257 (KH), and Arg-270 contribute to the coenzyme B site. The residue at position 257 (His-257) is a Pros-methylhistidine. Arg-271 is subject to 5-methylarginine. Coenzyme M is bound at residue Tyr-333. The residue at position 400 (Gln-400) is a 2-methylglutamine. Tyr-444 is a coenzyme M binding site. Gly-445 bears the 1-thioglycine mark. Asp-450 carries the post-translational modification (Z)-2,3-didehydroaspartate. Cys-452 carries the S-methylcysteine modification.

It belongs to the methyl-coenzyme M reductase alpha subunit family. As to quaternary structure, MCR is a hexamer of two alpha, two beta, and two gamma chains, forming a dimer of heterotrimers. Requires coenzyme F430 as cofactor. The alpha subunit contains six modified amino acids near the active site region. Is methylated on His-257, Arg-271, Gln-400 and Cys-452, probably by the action of specific S-adenosylmethionine-dependent methyltransferases. Also contains a thioglycine at position 445, forming a thiopeptide bond. Contains a didehydroaspartate residue at position 450. The methylation on C5 of Arg-271 is a post-translational methylation not essential in vivo, but which plays a role for the stability and structural integrity of MCR.

Its subcellular location is the cytoplasm. It catalyses the reaction coenzyme B + methyl-coenzyme M = methane + coenzyme M-coenzyme B heterodisulfide. Its pathway is one-carbon metabolism; methyl-coenzyme M reduction; methane from methyl-coenzyme M: step 1/1. In terms of biological role, component of the methyl-coenzyme M reductase (MCR) I that catalyzes the reductive cleavage of methyl-coenzyme M (CoM-S-CH3 or 2-(methylthio)ethanesulfonate) using coenzyme B (CoB or 7-mercaptoheptanoylthreonine phosphate) as reductant which results in the production of methane and the mixed heterodisulfide of CoB and CoM (CoM-S-S-CoB). This is the final step in methanogenesis. In Methanothermobacter thermautotrophicus (strain ATCC 29096 / DSM 1053 / JCM 10044 / NBRC 100330 / Delta H) (Methanobacterium thermoautotrophicum), this protein is Methyl-coenzyme M reductase subunit alpha (mcrA).